The sequence spans 477 residues: Stromelysin-1 (477 aa).

The signal sequence occupies residues 1-17; that stretch reads MKNLPILLLLCVAACSA. Positions 18-99 are cleaved as a propeptide — activation peptide; sequence YPLDRSARDE…SRCGVPDVGH (82 aa). Positions 90 to 97 match the Cysteine switch motif; that stretch reads SRCGVPDV. Cys-92 provides a ligand contact to Zn(2+). Asn-120 carries N-linked (GlcNAc...) asparagine glycosylation. Ca(2+) contacts are provided by Asp-124 and Asp-158. His-168 and Asp-170 together coordinate Zn(2+). Asp-175, Gly-176, Gly-178, and Val-180 together coordinate Ca(2+). Residue His-183 participates in Zn(2+) binding. Ca(2+) is bound by residues Gly-190, Asn-192, and Asp-194. Residue His-196 coordinates Zn(2+). Residues Asp-198, Asp-199, and Glu-201 each contribute to the Ca(2+) site. Position 218 (His-218) interacts with Zn(2+). Glu-219 is an active-site residue. Positions 222 and 228 each coordinate Zn(2+). The segment at 260-285 is disordered; the sequence is QSLYGPPPASPDSPVEPSEPEPPAPG. Hemopexin repeat units follow at residues 287–336, 337–383, 385–433, and 434–477; these read LAMC…WPSL, PSGI…GFPP, VRKI…FPGI, and DSKL…WFNC. Cysteines 290 and 477 form a disulfide. Asp-297 serves as a coordination point for Ca(2+). Ca(2+)-binding residues include Asp-389 and Asp-438.

Belongs to the peptidase M10A family. Ca(2+) serves as cofactor. It depends on Zn(2+) as a cofactor.

It is found in the secreted. The protein resides in the extracellular space. Its subcellular location is the extracellular matrix. The catalysed reaction is Preferential cleavage where P1', P2' and P3' are hydrophobic residues.. Functionally, metalloproteinase with a rather broad substrate specificity that can degrade fibronectin, laminin, gelatins of type I, III, IV, and V; collagens III, IV, X, and IX, and cartilage proteoglycans. Activates different molecules including growth factors, plasminogen or other matrix metalloproteinases such as MMP9. Once released into the extracellular matrix (ECM), the inactive pro-enzyme is activated by the plasmin cascade signaling pathway. Also acts intracellularly. For example, in dopaminergic neurons, gets activated by the serine protease HTRA2 upon stress and plays a pivotal role in DA neuronal degeneration by mediating microglial activation and alpha-synuclein/SNCA cleavage. In addition, plays a role in immune response and possesses antiviral activity against various viruses. Mechanistically, translocates from the cytoplasm into the cell nucleus upon virus infection to influence NF-kappa-B activities. The chain is Stromelysin-1 (MMP3) from Equus caballus (Horse).